The sequence spans 399 residues: DJ-1 protein homolog F (399 aa).

PfpI endopeptidase domains follow at residues 7–199 and 211–394; these read KSVL…ESLG and TSLL…TALG.

Belongs to the peptidase C56 family. In terms of assembly, homotrimer.

May be involved in oxidative stress response. This is DJ-1 protein homolog F (DJ1F) from Arabidopsis thaliana (Mouse-ear cress).